The chain runs to 451 residues: MLRTRLTNCSLWRPYYTSSLSRVPRAPPDKVLGLSEHFKKVKNVNKIDLTVGIYKDGWGKVTTFPSVAKAQKLIESHLELNKNLSYLPITGSKEFQENVMKFLFKESCPQFGPFYLAHDRISFVQTLSGTGALAVAAKFLALFISRDIWIPDPSWANHKNIFQNNGFENIYRYSYYKDGQIDIDGWIEQLKTFAYNNQQENNKNPPCIILHACCHNPTGLDPTKEQWEKIIDTIYELKMVPIVDMAYQGLESGNLLKDAYLLRLCLNVNKYPNWSNGIFLCQSFAKNMGLYGERVGSLSVITPATANNGKFNPLQQKNSLQQNIDSQLKKIVRGMYSSPPGYGSRVVNVVLSDFKLKQQWFKDVDFMVQRLHHVRQEMFDRLGWPDLVNFAQQHGMFYYTRFSPKQVEILRNNYFVYLTGDGRLSLSGVNDSNVDYLCESLEAVSKMDKLA.

3 residues coordinate L-aspartate: Gly52, Trp155, and Asn216. Lys286 is modified (N6-(pyridoxal phosphate)lysine). Position 423 (Arg423) interacts with L-aspartate.

It belongs to the class-I pyridoxal-phosphate-dependent aminotransferase family. As to quaternary structure, homodimer. The cofactor is pyridoxal 5'-phosphate.

The protein localises to the mitochondrion matrix. It carries out the reaction L-aspartate + 2-oxoglutarate = oxaloacetate + L-glutamate. In terms of biological role, plays a key role in amino acid metabolism. Important for metabolite exchange between mitochondria and cytosol. The chain is Aspartate aminotransferase, mitochondrial (AAT1) from Saccharomyces cerevisiae (strain ATCC 204508 / S288c) (Baker's yeast).